Here is a 274-residue protein sequence, read N- to C-terminus: Penicillin-insensitive murein endopeptidase (274 aa).

Residues 1–19 form the signal peptide; the sequence is MKKTAIALLAWFVSSASLA. 3 disulfide bridges follow: cysteine 44-cysteine 265, cysteine 187-cysteine 235, and cysteine 216-cysteine 223. 5 residues coordinate Zn(2+): histidine 110, histidine 113, aspartate 120, aspartate 147, and histidine 150. The segment at 225 to 274 is disordered; sequence DQPLPPPGDGCGAELQSWFEPPKPGTTKPEKKTPPPLPPSCQALLDEHVL.

The protein belongs to the peptidase M74 family. As to quaternary structure, dimer. Requires Zn(2+) as cofactor.

The protein localises to the periplasm. Murein endopeptidase that cleaves the D-alanyl-meso-2,6-diamino-pimelyl amide bond that connects peptidoglycan strands. Likely plays a role in the removal of murein from the sacculus. The sequence is that of Penicillin-insensitive murein endopeptidase from Salmonella paratyphi A (strain ATCC 9150 / SARB42).